The sequence spans 124 residues: MKSIGCDIIKVERFKNFLENKKKMERFFTHKEIENFKLKGGSIIESLAGKFAAKESLIKALSPLLQYKINYTLKDIEVIKSLKGNAEFCLHNEVEKFAIKMNLKLYLTISHEKEYAIAFVIVEN.

Residues Asp-7 and Glu-55 each coordinate Mg(2+).

This sequence belongs to the P-Pant transferase superfamily. AcpS family. Mg(2+) serves as cofactor.

It localises to the cytoplasm. It carries out the reaction apo-[ACP] + CoA = holo-[ACP] + adenosine 3',5'-bisphosphate + H(+). Its function is as follows. Transfers the 4'-phosphopantetheine moiety from coenzyme A to a Ser of acyl-carrier-protein. This is Holo-[acyl-carrier-protein] synthase from Borreliella burgdorferi (strain ATCC 35210 / DSM 4680 / CIP 102532 / B31) (Borrelia burgdorferi).